Here is a 296-residue protein sequence, read N- to C-terminus: Probable AP endonuclease (296 aa).

A disulfide bond links Cys16 and Cys20. 8 residues coordinate Zn(2+): His78, His115, Glu142, His182, His218, Asp231, His233, and Glu271.

It belongs to the AP endonuclease 2 family. The cofactor is Zn(2+).

It is found in the host nucleus. It localises to the host cytoplasm. The protein localises to the virion. In terms of biological role, endonuclease that plays a role in DNA repair. Cleaves phosphodiester bonds on the 5' side of apurinic or apyrimidinic sites (AP sites). In addition to endonuclease activity, the ASFV enzyme has a proofreading 3'-5' exonuclease activity that is considerably more efficient in the elimination of a mismatch than in that of a correctly paired base. Displays 3'-phosphatase and 3'-repair diesterase activities. The single nucleotide gaps generated by the AP endonuclease are filled by the viral AP endonuclease and DNA ligase. The sequence is that of Probable AP endonuclease from Ornithodoros (relapsing fever ticks).